Here is a 546-residue protein sequence, read N- to C-terminus: Chaperonin GroEL (546 aa).

ATP contacts are provided by residues 30-33, Lys-51, 87-91, Gly-415, 479-481, and Asp-495; these read TLGP, DGTTT, and NAA. Residues 526 to 546 form a disordered region; it reads KKDEPAMPAGGGMGGMGGMDF. Positions 534-546 are enriched in gly residues; sequence AGGGMGGMGGMDF.

It belongs to the chaperonin (HSP60) family. Forms a cylinder of 14 subunits composed of two heptameric rings stacked back-to-back. Interacts with the co-chaperonin GroES.

The protein localises to the cytoplasm. The enzyme catalyses ATP + H2O + a folded polypeptide = ADP + phosphate + an unfolded polypeptide.. Functionally, together with its co-chaperonin GroES, plays an essential role in assisting protein folding. The GroEL-GroES system forms a nano-cage that allows encapsulation of the non-native substrate proteins and provides a physical environment optimized to promote and accelerate protein folding. In Xanthomonas euvesicatoria pv. vesicatoria (strain 85-10) (Xanthomonas campestris pv. vesicatoria), this protein is Chaperonin GroEL.